The primary structure comprises 754 residues: Endothelin-converting enzyme 1 (754 aa).

At 1–52 (MMSTYKRATLDEEDLVDSLSEGEVYPNGLQVNFRNFRSSQRCWATRTQVEKR) the chain is on the cytoplasmic side. Phosphothreonine is present on threonine 9. A helical; Signal-anchor for type II membrane protein membrane pass occupies residues 53 to 73 (LIVLVALLAAGLVACLTALGI). Residues 74–754 (QYRTRTPPVC…MNPRHKCEVW (681 aa)) lie on the Extracellular side of the membrane. A Peptidase M13 domain is found at 82–754 (VCLSEACVSV…MNPRHKCEVW (673 aa)). 5 disulfide bridges follow: cysteine 83–cysteine 88, cysteine 106–cysteine 739, cysteine 114–cysteine 699, cysteine 169–cysteine 419, and cysteine 628–cysteine 751. 8 N-linked (GlcNAc...) asparagine glycosylation sites follow: asparagine 150, asparagine 171, asparagine 194, asparagine 254, asparagine 300, asparagine 346, asparagine 367, and asparagine 523. Residue histidine 591 participates in Zn(2+) binding. Glutamate 592 is an active-site residue. Histidine 595 lines the Zn(2+) pocket. N-linked (GlcNAc...) asparagine glycans are attached at residues asparagine 616 and asparagine 635. Glutamate 651 is a Zn(2+) binding site. The Proton donor role is filled by aspartate 655.

This sequence belongs to the peptidase M13 family. In terms of assembly, homodimer; disulfide-linked. Interacts with PPP1R16B. Interacts with TSPAN8; this interaction recruits the endothelin converting enzyme ECE1 to tetraspanin-enriched microdomains and positively modulates its enzymatic activity. The cofactor is Zn(2+).

The protein localises to the cell membrane. The catalysed reaction is Hydrolysis of the 21-Trp-|-Val-22 bond in big endothelin to form endothelin 1.. Its activity is regulated as follows. Inhibited by phosphoramidon. In terms of biological role, converts big endothelin-1 to endothelin-1. The polypeptide is Endothelin-converting enzyme 1 (ECE1) (Cavia porcellus (Guinea pig)).